The following is a 117-amino-acid chain: Small ribosomal subunit protein bS6 (117 aa).

The disordered stretch occupies residues 96-117 (HAEGPSVQMQKRDERDSRRERR). Over residues 105–117 (QKRDERDSRRERR) the composition is skewed to basic and acidic residues.

It belongs to the bacterial ribosomal protein bS6 family.

In terms of biological role, binds together with bS18 to 16S ribosomal RNA. The chain is Small ribosomal subunit protein bS6 from Ruegeria pomeroyi (strain ATCC 700808 / DSM 15171 / DSS-3) (Silicibacter pomeroyi).